The chain runs to 256 residues: Type III pantothenate kinase (256 aa).

An ATP-binding site is contributed by 6-13; that stretch reads DIGNSSIV. Substrate-binding positions include Tyr-101 and 108–111; that span reads GADR. Asp-110 acts as the Proton acceptor in catalysis. Asp-130 is a binding site for K(+). Residue Thr-133 participates in ATP binding. Thr-185 is a binding site for substrate.

This sequence belongs to the type III pantothenate kinase family. Homodimer. Requires NH4(+) as cofactor. It depends on K(+) as a cofactor.

The protein resides in the cytoplasm. The catalysed reaction is (R)-pantothenate + ATP = (R)-4'-phosphopantothenate + ADP + H(+). The protein operates within cofactor biosynthesis; coenzyme A biosynthesis; CoA from (R)-pantothenate: step 1/5. Functionally, catalyzes the phosphorylation of pantothenate (Pan), the first step in CoA biosynthesis. This chain is Type III pantothenate kinase, found in Shouchella clausii (strain KSM-K16) (Alkalihalobacillus clausii).